The chain runs to 416 residues: D-amino acid dehydrogenase 2 (416 aa).

5 to 19 (VCIIGAGVVGLATAY) provides a ligand contact to FAD.

Belongs to the DadA oxidoreductase family. FAD serves as cofactor.

It carries out the reaction a D-alpha-amino acid + A + H2O = a 2-oxocarboxylate + AH2 + NH4(+). Its function is as follows. Oxidative deamination of D-amino acids. The polypeptide is D-amino acid dehydrogenase 2 (dadA2) (Pseudomonas aeruginosa (strain ATCC 15692 / DSM 22644 / CIP 104116 / JCM 14847 / LMG 12228 / 1C / PRS 101 / PAO1)).